Reading from the N-terminus, the 309-residue chain is Homoserine kinase (309 aa).

95–105 is a binding site for ATP; it reads PHGRGLGSSSA.

It belongs to the GHMP kinase family. Homoserine kinase subfamily.

The protein localises to the cytoplasm. The enzyme catalyses L-homoserine + ATP = O-phospho-L-homoserine + ADP + H(+). It functions in the pathway amino-acid biosynthesis; L-threonine biosynthesis; L-threonine from L-aspartate: step 4/5. Functionally, catalyzes the ATP-dependent phosphorylation of L-homoserine to L-homoserine phosphate. This chain is Homoserine kinase, found in Streptomyces coelicolor (strain ATCC BAA-471 / A3(2) / M145).